The sequence spans 1100 residues: Lysylphosphatidylglycerol biosynthesis bifunctional protein LysX (1100 aa).

A phosphatidylglycerol lysyltransferase region spans residues 1 to 601; the sequence is MTPTSLARAR…LLHSDGTAPD (601 aa). A run of 7 helical transmembrane segments spans residues 18–38, 60–80, 84–104, 112–132, 154–174, 206–226, and 314–332; these read VPAA…LASV, FPDT…ALAA, IAWW…IAGL, FAEV…AFLL, LVAS…LFPG, VFVN…TAIV, and AYGW…AQAF. A lysine--tRNA ligase region spans residues 602-1100; it reads GMGLQADLAD…TLPFPLAKPR (499 aa). A DNA-binding region (OB) is located at residues 661–739; that stretch reads VAVAGRVLRS…SLLVSGWRLI (79 aa). Residues D1012 and E1019 each coordinate Mg(2+).

This sequence in the N-terminal section; belongs to the LPG synthetase family. It in the C-terminal section; belongs to the class-II aminoacyl-tRNA synthetase family. The cofactor is Mg(2+).

The protein localises to the cell membrane. The catalysed reaction is tRNA(Lys) + L-lysine + ATP = L-lysyl-tRNA(Lys) + AMP + diphosphate. It catalyses the reaction L-lysyl-tRNA(Lys) + a 1,2-diacyl-sn-glycero-3-phospho-(1'-sn-glycerol) = a 1,2-diacyl-sn-glycero-3-phospho-1'-(3'-O-L-lysyl)-sn-glycerol + tRNA(Lys). Functionally, catalyzes the production of L-lysyl-tRNA(Lys)transfer and the transfer of a lysyl group from L-lysyl-tRNA(Lys) to membrane-bound phosphatidylglycerol (PG), which produces lysylphosphatidylglycerol (LPG), one of the components of the bacterial membrane with a positive net charge. LPG synthesis contributes to the resistance to cationic antimicrobial peptides (CAMPs) and likely protects M.tuberculosis against the CAMPs produced by competiting microorganisms (bacteriocins). In fact, the modification of anionic phosphatidylglycerol with positively charged L-lysine results in repulsion of the peptides. The polypeptide is Lysylphosphatidylglycerol biosynthesis bifunctional protein LysX (lysX) (Mycolicibacterium vanbaalenii (strain DSM 7251 / JCM 13017 / BCRC 16820 / KCTC 9966 / NRRL B-24157 / PYR-1) (Mycobacterium vanbaalenii)).